Consider the following 34-residue polypeptide: Dermaseptin-S2 (34 aa).

Belongs to the frog skin active peptide (FSAP) family. Dermaseptin subfamily. As to expression, expressed by the skin glands.

The protein resides in the secreted. Functionally, potent antimicrobial peptide with activity against bacteria and protozoa. Also has activity against fungi. Probably acts by disturbing membrane functions with its amphipathic structure. The sequence is that of Dermaseptin-S2 from Phyllomedusa sauvagei (Sauvage's leaf frog).